The following is a 447-amino-acid chain: MLHRYLPMTEEDKKEMLETIGVQTIDELFSDIPESVRFKGDLKIKQAKSEPELLKELSGLARKNANLKEYASFLGAGVYDHYAPVIVDHVLSRSEFYTAYTPYQPEISQGELQAIFEFQTMICELTGMDVANSSMYDGGTALAEAAMLAAGHTRKKKILVSKAVHPESRAVLETYAKGQHLEVVEIDHKDGVTNLDGLQSEMDDTVACVIVQYPNFFGQIEKLADIEKIVHEQKALFIVSSNPLSLGVLTPPGKFGADIVIGDAQPFGIPTQFGGPHCGYFATTKAFMRKIPGRLVGQTVDTEGKRGFVLTLQAREQHIRRDKATSNICSNQALNALAASVAMTALGKRGVKEMARQNISKAQYAKRQFEEKGFKVVFTGPFFNEFVVDCKRPVKEINDTLLQKGIIGGYDLGRDDEKLVNHMLVAVTELRTKAEIDTLVNEMGAIQ.

The protein belongs to the GcvP family. N-terminal subunit subfamily. The glycine cleavage system is composed of four proteins: P, T, L and H. In this organism, the P 'protein' is a heterodimer of two subunits.

The enzyme catalyses N(6)-[(R)-lipoyl]-L-lysyl-[glycine-cleavage complex H protein] + glycine + H(+) = N(6)-[(R)-S(8)-aminomethyldihydrolipoyl]-L-lysyl-[glycine-cleavage complex H protein] + CO2. Its function is as follows. The glycine cleavage system catalyzes the degradation of glycine. The P protein binds the alpha-amino group of glycine through its pyridoxal phosphate cofactor; CO(2) is released and the remaining methylamine moiety is then transferred to the lipoamide cofactor of the H protein. The polypeptide is Probable glycine dehydrogenase (decarboxylating) subunit 1 (Bacillus cytotoxicus (strain DSM 22905 / CIP 110041 / 391-98 / NVH 391-98)).